The primary structure comprises 141 residues: Galactose-6-phosphate isomerase subunit LacA (141 aa).

It belongs to the LacAB/RpiB family. As to quaternary structure, heteromultimeric protein consisting of LacA and LacB.

The enzyme catalyses aldehydo-D-galactose 6-phosphate = keto-D-tagatose 6-phosphate. It participates in carbohydrate metabolism; D-galactose 6-phosphate degradation; D-tagatose 6-phosphate from D-galactose 6-phosphate: step 1/1. The sequence is that of Galactose-6-phosphate isomerase subunit LacA from Streptococcus pneumoniae (strain P1031).